A 655-amino-acid chain; its full sequence is Katanin p80 WD40 repeat-containing subunit B1 (655 aa).

WD repeat units lie at residues 18-58 (AHGS…CIMS), 61-100 (GHTTPVESVRFNNAEELIVAGSQSGSLRVWDLEAAKILRT), 103-142 (GHKANVCSLDFHPYGDFVASGSLDTNIKLWDVRRKGCVFR), 145-184 (GHTQAVRCLRFSPDGKWLASASDDHSVKLWDLTAGKMMAE), 187-226 (EHKGPVNIIEFHPNEYLLASGSADRTVRFWDLEKFQLIGC), and 229-269 (GETI…DTVP). The disordered stretch occupies residues 316-453 (VPAEMPISQP…PVPAPQSKPP (138 aa)). Basic and acidic residues predominate over residues 358–374 (KESRAEIQNPEDYKEIF). Over residues 415-426 (PATSNKNNTEQL) the composition is skewed to polar residues.

This sequence belongs to the WD repeat KATNB1 family. As to quaternary structure, interacts with katna1. This interaction enhances the microtubule binding and severing activity of katna1 and also targets this activity to the centrosome.

It is found in the cytoplasm. Its subcellular location is the cytoskeleton. The protein resides in the microtubule organizing center. The protein localises to the centrosome. It localises to the spindle pole. It is found in the spindle. Participates in a complex which severs microtubules in an ATP-dependent manner. May act to target the enzymatic subunit of this complex to sites of action such as the centrosome. Microtubule severing may promote rapid reorganization of cellular microtubule arrays and the release of microtubules from the centrosome following nucleation. This Xenopus tropicalis (Western clawed frog) protein is Katanin p80 WD40 repeat-containing subunit B1 (katnb1).